Consider the following 226-residue polypeptide: MDWGALQTILGGVNKHSTSIGKIWLTVLFIFRIMILVVAAKEVWGDEQADFVCNTLQPGCKNVCYDHYFPISHIRLWALQLIFVSTPALLVAMHVAYRRHEKKRKFIKGEIKSEFKDIEEIKTQKVRIEGSLWWTYTSSIFFRVIFEAAFMYVFYVMYDGFSMQRLVKCNAWPCPNTVDCFVSRPTEKTVFTVFMIAVSGICILLNVTELCYLLIRYCSGRSKKPV.

The stretch at 2 to 13 (DWGALQTILGGV) is an intramembrane region. The Cytoplasmic segment spans residues 14–20 (NKHSTSI). Residues 21–40 (GKIWLTVLFIFRIMILVVAA) traverse the membrane as a helical segment. Over 41–73 (KEVWGDEQADFVCNTLQPGCKNVCYDHYFPISH) the chain is Extracellular. Glu-42, Gly-45, and Glu-47 together coordinate Ca(2+). 3 disulfides stabilise this stretch: Cys-53-Cys-180, Cys-60-Cys-174, and Cys-64-Cys-169. A helical membrane pass occupies residues 74–94 (IRLWALQLIFVSTPALLVAMH). Over 95-135 (VAYRRHEKKRKFIKGEIKSEFKDIEEIKTQKVRIEGSLWWT) the chain is Cytoplasmic. Residues 136–156 (YTSSIFFRVIFEAAFMYVFYV) traverse the membrane as a helical segment. Residues 157–189 (MYDGFSMQRLVKCNAWPCPNTVDCFVSRPTEKT) lie on the Extracellular side of the membrane. The chain crosses the membrane as a helical span at residues 190–210 (VFTVFMIAVSGICILLNVTEL). Topologically, residues 211–226 (CYLLIRYCSGRSKKPV) are cytoplasmic.

The protein belongs to the connexin family. Beta-type (group I) subfamily. A hemichannel or connexon is composed of a hexamer of connexins. A functional gap junction is formed by the apposition of two hemichannels. Forms heteromeric channels with GJB4. Interacts with CNST.

The protein localises to the cell membrane. It localises to the cell junction. Its subcellular location is the gap junction. Functionally, structural component of gap junctions. Gap junctions are dodecameric channels that connect the cytoplasm of adjoining cells. They are formed by the docking of two hexameric hemichannels, one from each cell membrane. Small molecules and ions diffuse from one cell to a neighboring cell via the central pore. The sequence is that of Gap junction beta-2 protein (GJB2) from Pongo pygmaeus (Bornean orangutan).